The sequence spans 77 residues: MMKIQIYGTGCANCQMLEKNAREAVKELGIDAEFEKIKEMDQILEAGLTALPGLAVDGELKIMGRVASKEEIKKILS.

Residues cysteine 11 and cysteine 14 each act as nucleophile in the active site. The cysteines at positions 11 and 14 are disulfide-linked.

Belongs to the glutaredoxin family.

Its function is as follows. Does not function as a glutathione-disulfide oxidoreductase in the presence of glutathione and glutathione reductase. Has low thioredoxin activity in vitro. The sequence is that of Thioredoxin from Methanothermobacter thermautotrophicus (strain ATCC 29096 / DSM 1053 / JCM 10044 / NBRC 100330 / Delta H) (Methanobacterium thermoautotrophicum).